The chain runs to 206 residues: FMN-dependent NADH:quinone oxidoreductase (206 aa).

FMN contacts are provided by residues 15–17 (SVS), 94–97 (MYNF), and 138–141 (TRGG).

This sequence belongs to the azoreductase type 1 family. In terms of assembly, homodimer. It depends on FMN as a cofactor.

The enzyme catalyses 2 a quinone + NADH + H(+) = 2 a 1,4-benzosemiquinone + NAD(+). It catalyses the reaction N,N-dimethyl-1,4-phenylenediamine + anthranilate + 2 NAD(+) = 2-(4-dimethylaminophenyl)diazenylbenzoate + 2 NADH + 2 H(+). Quinone reductase that provides resistance to thiol-specific stress caused by electrophilic quinones. Its function is as follows. Also exhibits azoreductase activity. Catalyzes the reductive cleavage of the azo bond in aromatic azo compounds to the corresponding amines. This Sinorhizobium fredii (strain NBRC 101917 / NGR234) protein is FMN-dependent NADH:quinone oxidoreductase.